The following is a 633-amino-acid chain: UvrABC system protein C (633 aa).

In terms of domain architecture, GIY-YIG spans Pro37–Ile115. One can recognise a UVR domain in the interval Asn225 to Val260.

The protein belongs to the UvrC family. As to quaternary structure, interacts with UvrB in an incision complex.

The protein localises to the cytoplasm. Its function is as follows. The UvrABC repair system catalyzes the recognition and processing of DNA lesions. UvrC both incises the 5' and 3' sides of the lesion. The N-terminal half is responsible for the 3' incision and the C-terminal half is responsible for the 5' incision. The sequence is that of UvrABC system protein C from Maricaulis maris (strain MCS10) (Caulobacter maris).